The sequence spans 194 residues: Ion-translocating oxidoreductase complex subunit A (194 aa).

The next 6 helical transmembrane spans lie at 4 to 24, 39 to 59, 71 to 91, 102 to 122, 131 to 151, and 172 to 192; these read LVLIMVSAILVNNFVLVQFLG, IGLSLATTFVLTLAAMCSYLV, FLRTISFILVIAVTVQFTEMV, VLGIFLPLITTNCIVLGVALL, FITATVNGFAAGLGFSLVLVL, and AIGMITAGLMSLAFMGFAGLI.

It belongs to the NqrDE/RnfAE family. The complex is composed of six subunits: RnfA, RnfB, RnfC, RnfD, RnfE and RnfG.

It is found in the cell inner membrane. Functionally, part of a membrane-bound complex that couples electron transfer with translocation of ions across the membrane. This chain is Ion-translocating oxidoreductase complex subunit A, found in Ectopseudomonas mendocina (strain ymp) (Pseudomonas mendocina).